A 138-amino-acid polypeptide reads, in one-letter code: uncharacterized protein (138 aa).

This is an uncharacterized protein from Archaeoglobus fulgidus (strain ATCC 49558 / DSM 4304 / JCM 9628 / NBRC 100126 / VC-16).